We begin with the raw amino-acid sequence, 431 residues long: Glucose-1-phosphate adenylyltransferase (431 aa).

Lysine 39 contacts beta-D-fructose 1,6-bisphosphate. AMP is bound by residues arginine 40, histidine 46, and arginine 52. Tyrosine 114 serves as a coordination point for alpha-D-glucose 1-phosphate. Arginine 130 lines the AMP pocket. Alpha-D-glucose 1-phosphate is bound by residues glycine 179, 194 to 195, and serine 212; that span reads EK. Arginine 386 lines the AMP pocket. 429–431 contributes to the beta-D-fructose 1,6-bisphosphate binding site; the sequence is QER.

This sequence belongs to the bacterial/plant glucose-1-phosphate adenylyltransferase family. Homotetramer.

It carries out the reaction alpha-D-glucose 1-phosphate + ATP + H(+) = ADP-alpha-D-glucose + diphosphate. It functions in the pathway glycan biosynthesis; glycogen biosynthesis. Allosterically activated by fructose-1,6-bisphosphate (F16BP) and inhibited by AMP. Functionally, involved in the biosynthesis of ADP-glucose, a building block required for the elongation reactions to produce glycogen. Catalyzes the reaction between ATP and alpha-D-glucose 1-phosphate (G1P) to produce pyrophosphate and ADP-Glc. The chain is Glucose-1-phosphate adenylyltransferase from Klebsiella pneumoniae subsp. pneumoniae (strain ATCC 700721 / MGH 78578).